We begin with the raw amino-acid sequence, 482 residues long: Cysteine--tRNA ligase (482 aa).

Cysteine 28 lines the Zn(2+) pocket. Positions 30–40 match the 'HIGH' region motif; that stretch reads PTVYNFLHVGN. 3 residues coordinate Zn(2+): cysteine 208, histidine 233, and glutamate 237. Positions 265–269 match the 'KMSKS' region motif; that stretch reads KMSKS. Residue lysine 268 participates in ATP binding.

Belongs to the class-I aminoacyl-tRNA synthetase family. In terms of assembly, monomer. Zn(2+) serves as cofactor.

It localises to the cytoplasm. It carries out the reaction tRNA(Cys) + L-cysteine + ATP = L-cysteinyl-tRNA(Cys) + AMP + diphosphate. The chain is Cysteine--tRNA ligase from Bdellovibrio bacteriovorus (strain ATCC 15356 / DSM 50701 / NCIMB 9529 / HD100).